Here is a 392-residue protein sequence, read N- to C-terminus: L-rhamnonate dehydratase (392 aa).

2 residues coordinate substrate: histidine 22 and arginine 48. The Mg(2+) site is built by aspartate 214, glutamate 240, and glutamate 268. The active-site Proton acceptor is the histidine 318. Residue glutamate 338 coordinates substrate.

This sequence belongs to the mandelate racemase/muconate lactonizing enzyme family. RhamD subfamily. As to quaternary structure, homooctamer; tetramer of dimers. Mg(2+) is required as a cofactor.

The catalysed reaction is L-rhamnonate = 2-dehydro-3-deoxy-L-rhamnonate + H2O. Its function is as follows. Catalyzes the dehydration of L-rhamnonate to 2-keto-3-deoxy-L-rhamnonate (KDR). This chain is L-rhamnonate dehydratase, found in Burkholderia cenocepacia (strain HI2424).